We begin with the raw amino-acid sequence, 234 residues long: 7-cyano-7-deazaguanine synthase (234 aa).

ATP is bound at residue 8 to 18 (FSGGQDSTTCA). 4 residues coordinate Zn(2+): C194, C202, C205, and C208.

Belongs to the QueC family. It depends on Zn(2+) as a cofactor.

The enzyme catalyses 7-carboxy-7-deazaguanine + NH4(+) + ATP = 7-cyano-7-deazaguanine + ADP + phosphate + H2O + H(+). It functions in the pathway purine metabolism; 7-cyano-7-deazaguanine biosynthesis. Its function is as follows. Catalyzes the ATP-dependent conversion of 7-carboxy-7-deazaguanine (CDG) to 7-cyano-7-deazaguanine (preQ(0)). In Gloeobacter violaceus (strain ATCC 29082 / PCC 7421), this protein is 7-cyano-7-deazaguanine synthase.